Here is a 103-residue protein sequence, read N- to C-terminus: Large ribosomal subunit protein bL21 (103 aa).

It belongs to the bacterial ribosomal protein bL21 family. In terms of assembly, part of the 50S ribosomal subunit. Contacts protein L20.

Its function is as follows. This protein binds to 23S rRNA in the presence of protein L20. This is Large ribosomal subunit protein bL21 from Ruminiclostridium cellulolyticum (strain ATCC 35319 / DSM 5812 / JCM 6584 / H10) (Clostridium cellulolyticum).